Here is a 185-residue protein sequence, read N- to C-terminus: Ribosome-recycling factor (185 aa).

This sequence belongs to the RRF family.

It is found in the cytoplasm. Functionally, responsible for the release of ribosomes from messenger RNA at the termination of protein biosynthesis. May increase the efficiency of translation by recycling ribosomes from one round of translation to another. This Geobacter sulfurreducens (strain ATCC 51573 / DSM 12127 / PCA) protein is Ribosome-recycling factor.